Reading from the N-terminus, the 479-residue chain is Glutamate receptor U1 (479 aa).

An N-terminal signal peptide occupies residues 1-17 (MEKSLLFLFAVTLLSVG). Residues 18 to 163 (CTDAGESKGS…LFGFLTPFSK (146 aa)) are Extracellular-facing. N-linked (GlcNAc...) asparagine glycosylation occurs at Asn79. The chain crosses the membrane as a helical span at residues 164-184 (ETWIGILVAYMVTSLCLFLVG). Topologically, residues 185–229 (RLSPCEWTELSTEQNNFTFLNSLWFGAGAFTLQGAEPHPKSVSAR) are cytoplasmic. A helical membrane pass occupies residues 230-250 (IIAVIWWIFSIVLVAAYIASF). At 251 to 414 (AAFLNSDSVQ…AGWNPVQPHT (164 aa)) the chain is on the extracellular side. Asn282 carries N-linked (GlcNAc...) asparagine glycosylation. The helical transmembrane segment at 415–435 (LGGIFLILGIGLALGVIAALI) threads the bilayer. Topologically, residues 436-479 (ELVLKARNNADQQKKSCCSAFSEEMGERLGTNKENQGAVDSVKS) are cytoplasmic.

It belongs to the glutamate-gated ion channel (TC 1.A.10.1) family. In terms of assembly, homomeric.

Its subcellular location is the cell membrane. The protein localises to the postsynaptic cell membrane. Receptor for glutamate. L-glutamate acts as an excitatory neurotransmitter at many synapses in the central nervous system. The postsynaptic actions of Glu are mediated by a variety of receptors that are named according to their selective agonists. This receptor binds domoate &gt; kainate &gt; AMPA &gt; NBQX &gt; glutamate. The chain is Glutamate receptor U1 (kbp) from Xenopus laevis (African clawed frog).